A 308-amino-acid chain; its full sequence is Ribosomal RNA small subunit methyltransferase H (308 aa).

Residues 31–33, D51, F75, D97, and Q104 each bind S-adenosyl-L-methionine; that span reads GGH.

Belongs to the methyltransferase superfamily. RsmH family.

Its subcellular location is the cytoplasm. The catalysed reaction is cytidine(1402) in 16S rRNA + S-adenosyl-L-methionine = N(4)-methylcytidine(1402) in 16S rRNA + S-adenosyl-L-homocysteine + H(+). Functionally, specifically methylates the N4 position of cytidine in position 1402 (C1402) of 16S rRNA. This is Ribosomal RNA small subunit methyltransferase H from Tolumonas auensis (strain DSM 9187 / NBRC 110442 / TA 4).